The sequence spans 190 residues: Holliday junction branch migration complex subunit RuvA (190 aa).

The segment at 1-64 is domain I; sequence MIGRITGTLI…EDAQLLYGFG (64 aa). The tract at residues 65–137 is domain II; it reads SSAERSTFRE…MRGKLGADIG (73 aa). The segment at 137 to 141 is flexible linker; sequence GATPH. The interval 142–190 is domain III; sequence AAGGHQSDILNALLALGYSDKESQAALKKLPEGVDVSEGIRLALKALVR.

It belongs to the RuvA family. Homotetramer. Forms an RuvA(8)-RuvB(12)-Holliday junction (HJ) complex. HJ DNA is sandwiched between 2 RuvA tetramers; dsDNA enters through RuvA and exits via RuvB. An RuvB hexamer assembles on each DNA strand where it exits the tetramer. Each RuvB hexamer is contacted by two RuvA subunits (via domain III) on 2 adjacent RuvB subunits; this complex drives branch migration. In the full resolvosome a probable DNA-RuvA(4)-RuvB(12)-RuvC(2) complex forms which resolves the HJ.

The protein localises to the cytoplasm. In terms of biological role, the RuvA-RuvB-RuvC complex processes Holliday junction (HJ) DNA during genetic recombination and DNA repair, while the RuvA-RuvB complex plays an important role in the rescue of blocked DNA replication forks via replication fork reversal (RFR). RuvA specifically binds to HJ cruciform DNA, conferring on it an open structure. The RuvB hexamer acts as an ATP-dependent pump, pulling dsDNA into and through the RuvAB complex. HJ branch migration allows RuvC to scan DNA until it finds its consensus sequence, where it cleaves and resolves the cruciform DNA. In Bordetella parapertussis (strain 12822 / ATCC BAA-587 / NCTC 13253), this protein is Holliday junction branch migration complex subunit RuvA.